We begin with the raw amino-acid sequence, 281 residues long: CDAN1-interacting nuclease 1 (281 aa).

Thr114 bears the Phosphothreonine mark.

The protein resides in the nucleus. The protein localises to the cytoplasm. Functionally, plays a role in erythroid cell differentiation. This chain is CDAN1-interacting nuclease 1, found in Mus musculus (Mouse).